The sequence spans 469 residues: 3-isopropylmalate dehydratase large subunit (469 aa).

Positions 347, 407, and 410 each coordinate [4Fe-4S] cluster.

Belongs to the aconitase/IPM isomerase family. LeuC type 1 subfamily. Heterodimer of LeuC and LeuD. It depends on [4Fe-4S] cluster as a cofactor.

It catalyses the reaction (2R,3S)-3-isopropylmalate = (2S)-2-isopropylmalate. It participates in amino-acid biosynthesis; L-leucine biosynthesis; L-leucine from 3-methyl-2-oxobutanoate: step 2/4. Its function is as follows. Catalyzes the isomerization between 2-isopropylmalate and 3-isopropylmalate, via the formation of 2-isopropylmaleate. The polypeptide is 3-isopropylmalate dehydratase large subunit (Prochlorococcus marinus (strain NATL2A)).